The primary structure comprises 1036 residues: uncharacterized protein (1036 aa).

The first 24 residues, M1–A24, serve as a signal peptide directing secretion. A helical transmembrane segment spans residues G1011 to L1033.

It is found in the membrane. This is an uncharacterized protein from Archaeoglobus fulgidus (strain ATCC 49558 / DSM 4304 / JCM 9628 / NBRC 100126 / VC-16).